The chain runs to 547 residues: Glucose-6-phosphate isomerase (547 aa).

E351 serves as the catalytic Proton donor. Active-site residues include H382 and K509.

This sequence belongs to the GPI family.

Its subcellular location is the cytoplasm. It catalyses the reaction alpha-D-glucose 6-phosphate = beta-D-fructose 6-phosphate. Its pathway is carbohydrate biosynthesis; gluconeogenesis. The protein operates within carbohydrate degradation; glycolysis; D-glyceraldehyde 3-phosphate and glycerone phosphate from D-glucose: step 2/4. In terms of biological role, catalyzes the reversible isomerization of glucose-6-phosphate to fructose-6-phosphate. This chain is Glucose-6-phosphate isomerase, found in Coxiella burnetii (strain Dugway 5J108-111).